A 1380-amino-acid chain; its full sequence is DNA-directed RNA polymerase subunit beta (1380 aa).

The protein belongs to the RNA polymerase beta chain family. In terms of assembly, the RNAP catalytic core consists of 2 alpha, 1 beta, 1 beta' and 1 omega subunit. When a sigma factor is associated with the core the holoenzyme is formed, which can initiate transcription.

It carries out the reaction RNA(n) + a ribonucleoside 5'-triphosphate = RNA(n+1) + diphosphate. DNA-dependent RNA polymerase catalyzes the transcription of DNA into RNA using the four ribonucleoside triphosphates as substrates. This chain is DNA-directed RNA polymerase subunit beta, found in Sinorhizobium fredii (strain NBRC 101917 / NGR234).